The primary structure comprises 792 residues: RAD50-interacting protein 1 (792 aa).

A disordered region spans residues 1 to 22 (MLPAGEIGASPAAPCCSESGDE). A coiled-coil region spans residues 103–124 (IRSALKNAEESKQFLNQFLEQE). In terms of domain architecture, RINT1/TIP20 spans 220-792 (WHKILKDKLT…LRTNWPNTGK (573 aa)).

This sequence belongs to the RINT1 family. As to quaternary structure, component of the NRZ complex composed of NBAS, ZW10 and RINT1/TIP20L; NRZ associates with SNAREs STX18, USE1L, BNIP1/SEC20L and SEC22B (the assembly has been described as syntaxin 18 complex). Interacts directly with BNIP1/SEC20L and ZW10. Interacts with UVRAG. Interacts with RAD50 during late S and G2/M phases. Interacts with RBL2, preferentially with the active, hypophosphorylated form.

It is found in the cytoplasm. The protein localises to the endoplasmic reticulum membrane. Involved in regulation of membrane traffic between the Golgi and the endoplasmic reticulum (ER); the function is proposed to depend on its association in the NRZ complex which is believed to play a role in SNARE assembly at the ER. May play a role in cell cycle checkpoint control. Essential for telomere length control. The sequence is that of RAD50-interacting protein 1 (RINT1) from Homo sapiens (Human).